The following is a 93-amino-acid chain: Molybdopterin synthase sulfur carrier subunit (93 aa).

Gly93 carries the 1-thioglycine; alternate modification. Gly93 bears the Glycyl adenylate; alternate mark.

Belongs to the MoaD family. MOCS2A subfamily. In terms of assembly, heterotetramer; composed of 2 small (MOCS2A) and 2 large (MOCS2B) subunits. In terms of processing, C-terminal thiocarboxylation occurs in 2 steps, it is first acyl-adenylated (-COAMP) via the hesA/moeB/thiF part of uba4, then thiocarboxylated (-COSH) via the rhodanese domain of uba4.

The protein localises to the cytoplasm. It functions in the pathway cofactor biosynthesis; molybdopterin biosynthesis. In terms of biological role, acts as a sulfur carrier required for molybdopterin biosynthesis. Component of the molybdopterin synthase complex that catalyzes the conversion of precursor Z into molybdopterin by mediating the incorporation of 2 sulfur atoms into precursor Z to generate a dithiolene group. In the complex, serves as sulfur donor by being thiocarboxylated (-COSH) at its C-terminus by uba4. After interaction with MOCS2B, the sulfur is then transferred to precursor Z to form molybdopterin. This is Molybdopterin synthase sulfur carrier subunit from Pyrenophora tritici-repentis (strain Pt-1C-BFP) (Wheat tan spot fungus).